A 552-amino-acid chain; its full sequence is Hydroxylamine reductase (552 aa).

[2Fe-2S] cluster contacts are provided by cysteine 3, cysteine 6, cysteine 18, and cysteine 25. The hybrid [4Fe-2O-2S] cluster site is built by histidine 250, glutamate 274, cysteine 318, cysteine 406, cysteine 434, cysteine 459, glutamate 493, and lysine 495. Cysteine 406 carries the cysteine persulfide modification.

Belongs to the HCP family. [2Fe-2S] cluster is required as a cofactor. Requires hybrid [4Fe-2O-2S] cluster as cofactor.

The protein resides in the cytoplasm. It carries out the reaction A + NH4(+) + H2O = hydroxylamine + AH2 + H(+). In terms of biological role, catalyzes the reduction of hydroxylamine to form NH(3) and H(2)O. In Shewanella sediminis (strain HAW-EB3), this protein is Hydroxylamine reductase.